Here is a 66-residue protein sequence, read N- to C-terminus: uncharacterized protein (66 aa).

This is an uncharacterized protein from Archaeoglobus fulgidus (strain ATCC 49558 / DSM 4304 / JCM 9628 / NBRC 100126 / VC-16).